The sequence spans 881 residues: Alanine--tRNA ligase (881 aa).

Residues histidine 566, histidine 570, cysteine 668, and histidine 672 each coordinate Zn(2+).

This sequence belongs to the class-II aminoacyl-tRNA synthetase family. Zn(2+) is required as a cofactor.

Its subcellular location is the cytoplasm. The enzyme catalyses tRNA(Ala) + L-alanine + ATP = L-alanyl-tRNA(Ala) + AMP + diphosphate. Its function is as follows. Catalyzes the attachment of alanine to tRNA(Ala) in a two-step reaction: alanine is first activated by ATP to form Ala-AMP and then transferred to the acceptor end of tRNA(Ala). Also edits incorrectly charged Ser-tRNA(Ala) and Gly-tRNA(Ala) via its editing domain. The chain is Alanine--tRNA ligase from Frankia casuarinae (strain DSM 45818 / CECT 9043 / HFP020203 / CcI3).